The primary structure comprises 105 residues: QPAVTPSVILFPPSSEELKDNKATLVCLISDFYPRTVKVNWKADGNSVTQGVDTTQPSKQSNNKYAASSFLHLTANQWKSYQSVTCQVTHEGHTVEKSLAPAECS.

One can recognise an Ig-like domain in the interval 6-100; it reads PSVILFPPSS…EGHTVEKSLA (95 aa). An intrachain disulfide couples Cys-27 to Cys-86.

The polypeptide is Ig lambda chain C region (Oryctolagus cuniculus (Rabbit)).